The following is a 1387-amino-acid chain: Mediator of RNA polymerase II transcription subunit 13 (1387 aa).

Disordered stretches follow at residues 81–102, 354–400, and 620–676; these read ELNN…PEFS, HSAN…ESYS, and SVNS…DIPM. Composition is skewed to polar residues over residues 354–367 and 390–400; these read HSAN…STGE and SRQNFPTESYS.

The protein belongs to the Mediator complex subunit 13 family. Component of the SRB8-11 complex, which itself associates with the Mediator complex.

Its subcellular location is the nucleus. In terms of biological role, component of the SRB8-11 complex. The SRB8-11 complex is a regulatory module of the Mediator complex which is itself involved in regulation of basal and activated RNA polymerase II-dependent transcription. The SRB8-11 complex may be involved in the transcriptional repression of a subset of genes regulated by Mediator. It may inhibit the association of the Mediator complex with RNA polymerase II to form the holoenzyme complex. The chain is Mediator of RNA polymerase II transcription subunit 13 (SSN2) from Kluyveromyces lactis (strain ATCC 8585 / CBS 2359 / DSM 70799 / NBRC 1267 / NRRL Y-1140 / WM37) (Yeast).